A 96-amino-acid chain; its full sequence is Large ribosomal subunit protein bL28 (96 aa).

A disordered region spans residues 1 to 23 (MSRVCELSGKAPMTGNTVSHANN).

The protein belongs to the bacterial ribosomal protein bL28 family.

This is Large ribosomal subunit protein bL28 from Cereibacter sphaeroides (strain ATCC 17029 / ATH 2.4.9) (Rhodobacter sphaeroides).